A 92-amino-acid polypeptide reads, in one-letter code: Small ribosomal subunit protein uS19 (92 aa).

This sequence belongs to the universal ribosomal protein uS19 family.

Functionally, protein S19 forms a complex with S13 that binds strongly to the 16S ribosomal RNA. This is Small ribosomal subunit protein uS19 from Dinoroseobacter shibae (strain DSM 16493 / NCIMB 14021 / DFL 12).